Here is a 130-residue protein sequence, read N- to C-terminus: MARRHCFSYWLLVCWLVVTVAEGQEEVFTPPGDSQNNADATDCQIFTLTPPPAPRSPVTRAQPITKTPRCPFHFFPRRPRIHFRFPNRPFVPSRCNHRFPFQPFYWPHRYLTYRYFPRRRLQRGSSSEES.

The N-terminal stretch at 1-23 (MARRHCFSYWLLVCWLVVTVAEG) is a signal peptide.

Highly expressed in placenta.

Its subcellular location is the secreted. In terms of biological role, may promote nucleation of hydroxyapatite. The polypeptide is Odontogenesis associated phosphoprotein (Homo sapiens (Human)).